Here is a 148-residue protein sequence, read N- to C-terminus: UPF0178 protein lpl0088 (148 aa).

It belongs to the UPF0178 family.

The sequence is that of UPF0178 protein lpl0088 from Legionella pneumophila (strain Lens).